The sequence spans 1139 residues: Hapless 2 (1139 aa).

An N-terminal signal peptide occupies residues 1–22 (MCRAIAVALIVYLAQHYILAHA). Residues 23-630 (EVIASGRLEK…TKKCWSKFGR (608 aa)) are Extracellular-facing. Cystine bridges form between cysteine 33–cysteine 44, cysteine 136–cysteine 164, cysteine 147–cysteine 210, cysteine 165–cysteine 383, cysteine 167–cysteine 190, cysteine 366–cysteine 390, and cysteine 475–cysteine 482. Low complexity predominate over residues 241 to 272 (APSPTTATTSATPRTNNSSSANSTNSTNSPAP). A disordered region spans residues 241–283 (APSPTTATTSATPRTNNSSSANSTNSTNSPAPQFLSPPAPSTR). The N-linked (GlcNAc...) asparagine glycan is linked to asparagine 497. Cysteine 515 and cysteine 556 are oxidised to a cystine. Threonine 577 is a glycosylation site (O-linked (GlcNAc...) threonine). A helical membrane pass occupies residues 631–651 (LLGIIGGALVGLGLLAVALKF). The Cytoplasmic portion of the chain corresponds to 652-1139 (GWLASLAASC…PVYDWQAPPK (488 aa)). 2 disordered regions span residues 689 to 719 (GGGQQQQQLPPAASHAMSPPQQQQRSHAEVA) and 741 to 1139 (HGGG…APPK). A compositionally biased stretch (basic and acidic residues) spans 753–767 (QHADTRHLQDRDSRA). The segment covering 770–789 (GGASIGSSSAGGSSSLSSYS) has biased composition (low complexity). A compositionally biased stretch (basic and acidic residues) spans 829 to 851 (WDARGRSPRVADEHGSPRQRYDG). The segment covering 868-884 (YDGGSGGGGGGGGGGYG) has biased composition (gly residues). Residues 887–904 (APPPQGPPPHPVGAPPPP) are compositionally biased toward pro residues. Gly residues-rich tracts occupy residues 919–943 (PGGGGGGGGGGGGGGGGGSGGGVDQ) and 955–965 (RGGGGPGGMRG). Residues 978–991 (GPHPHAPPPPPPPQ) show a composition bias toward pro residues. The segment covering 1018–1029 (GREEEAGGDRRG) has biased composition (basic and acidic residues). Gly residues predominate over residues 1040 to 1049 (GGRGAGGGRG). Pro residues predominate over residues 1054-1067 (IGSPPPGPLQPPEY). Composition is skewed to gly residues over residues 1078–1096 (GAGGGRGGVGGDGGGGGVG) and 1106–1118 (GGRGGGGGGGRGR).

Belongs to the HAP2/GCS1 family. As to quaternary structure, monomer. Homotrimer. Membrane contact and insertion (via its extracellular domain) into a lipid membrane probably triggers trimerization. Post-translationally, the protein present at the cell membrane is rapidly degraded after fusion between male (minus) and female (plus) gametes, contrary to the protein present in intracellular pools. This may represent a mechanism to avoid fusion of several male gametes with a single female gamete. N-glycosylated.

The protein resides in the cell membrane. The protein localises to the cell projection. It localises to the cytoplasmic vesicle membrane. Functionally, during fertilization, required on male (minus) gametes for their fusion with female (plus) gametes. Required for membrane fusion, but not for the initial adhesion between gametes. Inserts (via its extracellular domain) into lipid membranes (in vitro). Probably initiates the fusion of gamete cell membranes by inserting its extracellular domain into the cell membrane of a female gamete. The sequence is that of Hapless 2 from Chlamydomonas reinhardtii (Chlamydomonas smithii).